Consider the following 667-residue polypeptide: Holliday junction recognition protein (667 aa).

Positions 78 to 126 (LNGQAPEGDSESSGADTSLEENWPSCSSAMREASGDPRQRQPAVPGNTL) are disordered. Phosphoserine occurs at positions 169, 185, and 195. Disordered stretches follow at residues 181-201 (ISAK…GQGP) and 279-317 (RRRP…EPGK). Positions 279 to 297 (RRRPSRKQGLHKNRTHCPR) are enriched in basic residues. Phosphoserine occurs at positions 388, 424, 449, and 462. Positions 443 to 530 (YRSGSKSPGS…NSEPTGKAVW (88 aa)) are disordered. Residues 466–482 (GREKTERPGEALEDLRG) show a composition bias toward basic and acidic residues. The segment covering 496-515 (SCPSPEGSPSRSPSHSQLSS) has biased composition (low complexity). A Glycyl lysine isopeptide (Lys-Gly) (interchain with G-Cter in SUMO2) cross-link involves residue K554. S567 carries the post-translational modification Phosphoserine. The interval 596-617 (KRLNPDSPQQSSQKRSISPGCH) is disordered. The span at 601–611 (DSPQQSSQKRS) shows a compositional bias: polar residues. Residue S613 is modified to Phosphoserine.

As to quaternary structure, interacts with CENPA (via CATD domain); the interaction is direct and specific for CENPA since it does not interact with H3.1- or H3.3-containing nucleosomes. Heterotrimer composed of HJURP, CENPA and histone H4, where HJURP interacts with the dimer formed by CENPA and histone H4 and prevents tetramerization of CENPA and H4. Identified in a centromere complex containing histones H2A, H2B and H4, and at least CENPA, CENPB, CENPC, CENPT, CENPN, HJURP, SUPT16H, SSRP1 and RSF1. Interacts with 14-3-3 family members in a phosphorylation-dependent manner. Interacts with MSH5 and NBN.

It localises to the nucleus. The protein resides in the nucleolus. The protein localises to the chromosome. Its subcellular location is the centromere. Its function is as follows. Centromeric protein that plays a central role in the incorporation and maintenance of histone H3-like variant CENPA at centromeres. Acts as a specific chaperone for CENPA and is required for the incorporation of newly synthesized CENPA molecules into nucleosomes at replicated centromeres. Prevents CENPA-H4 tetramerization and prevents premature DNA binding by the CENPA-H4 tetramer. Directly binds Holliday junctions. This chain is Holliday junction recognition protein (Hjurp), found in Mus musculus (Mouse).